A 115-amino-acid chain; its full sequence is Histone H2A-Bbd type 2/3 (115 aa).

Positions methionine 1–serine 21 are disordered. The tract at residues leucine 87–aspartate 115 is docking domain.

Belongs to the histone H2A family. As to quaternary structure, the nucleosome is a histone octamer containing two molecules each of H2A, H2B, H3 and H4 assembled in one H3-H4 heterotetramer and two H2A-H2B heterodimers. May be incorporated into a proportion of nucleosomes, replacing one or more H2A molecules. In terms of tissue distribution, present in mature sperm.

It localises to the nucleus. Its subcellular location is the chromosome. Its function is as follows. Atypical histone H2A which can replace conventional H2A in some nucleosomes and is associated with active transcription and mRNA processing. Nucleosomes wrap and compact DNA into chromatin, limiting DNA accessibility to the cellular machineries which require DNA as a template. Histones thereby play a central role in transcription regulation, DNA repair, DNA replication and chromosomal stability. Nucleosomes containing this histone are less rigid and organize less DNA than canonical nucleosomes in vivo. They are enriched in actively transcribed genes and associate with the elongating form of RNA polymerase. They associate with spliceosome components and are required for mRNA splicing. May participate in spermatogenesis. This is Histone H2A-Bbd type 2/3 from Homo sapiens (Human).